A 230-amino-acid chain; its full sequence is Urease accessory protein UreE (230 aa).

Basic and acidic residues-rich tracts occupy residues 182-193 (HVHVDSPLDEPH) and 204-230 (SHGD…DHKH). The tract at residues 182–230 (HVHVDSPLDEPHGSGLHVHAIHSHGDGHSHSHSHDHDHDHRHDDHDHKH) is disordered.

Belongs to the UreE family.

Its subcellular location is the cytoplasm. Its function is as follows. Involved in urease metallocenter assembly. Binds nickel. Probably functions as a nickel donor during metallocenter assembly. The chain is Urease accessory protein UreE from Yersinia mollaretii.